A 282-amino-acid chain; its full sequence is Shikimate dehydrogenase (NADP(+)) (282 aa).

Shikimate contacts are provided by residues 16-18 (SLS) and T63. Catalysis depends on K67, which acts as the Proton acceptor. Residues N88 and D103 each contribute to the shikimate site. Residues 128 to 132 (GAGGA) and G243 contribute to the NADP(+) site.

Belongs to the shikimate dehydrogenase family. In terms of assembly, homodimer.

It carries out the reaction shikimate + NADP(+) = 3-dehydroshikimate + NADPH + H(+). Its pathway is metabolic intermediate biosynthesis; chorismate biosynthesis; chorismate from D-erythrose 4-phosphate and phosphoenolpyruvate: step 4/7. In terms of biological role, involved in the biosynthesis of the chorismate, which leads to the biosynthesis of aromatic amino acids. Catalyzes the reversible NADPH linked reduction of 3-dehydroshikimate (DHSA) to yield shikimate (SA). The polypeptide is Shikimate dehydrogenase (NADP(+)) (Xylella fastidiosa (strain Temecula1 / ATCC 700964)).